A 780-amino-acid polypeptide reads, in one-letter code: ATP-dependent 6-phosphofructokinase, muscle type (780 aa).

An N-acetylthreonine modification is found at Thr-2. An N-terminal catalytic PFK domain 1 region spans residues 2 to 390 (THEEHHATKT…NWEVYKLLAH (389 aa)). ATP-binding positions include Gly-25, 88-89 (RC), and 118-121 (GDGS). Position 119 (Asp-119) interacts with Mg(2+). Residue Ser-133 is modified to Phosphoserine. Substrate-binding positions include 164–166 (SID), Arg-201, 208–210 (MGR), Glu-264, Arg-292, and 298–301 (HVQR). Asp-166 serves as the catalytic Proton acceptor. Ser-377 bears the Phosphoserine mark. Residues 391–401 (VRPPVSKSGSH) are interdomain linker. The interval 402–780 (TVAVMNVGAP…TRKRSGEAAV (379 aa)) is C-terminal regulatory PFK domain 2. Beta-D-fructose 2,6-bisphosphate is bound by residues Arg-471 and 528-532 (TVSNN). O-linked (GlcNAc) serine glycosylation occurs at Ser-530. The residue at position 557 (Lys-557) is an N6-(2-hydroxyisobutyryl)lysine. Beta-D-fructose 2,6-bisphosphate-binding positions include Arg-566, 573–575 (MGG), Glu-629, Arg-655, and 661–664 (HMQQ). Residue Ser-667 is modified to Phosphoserine. A beta-D-fructose 2,6-bisphosphate-binding site is contributed by Arg-735. A Phosphoserine modification is found at Ser-775.

The protein belongs to the phosphofructokinase type A (PFKA) family. ATP-dependent PFK group I subfamily. Eukaryotic two domain clade 'E' sub-subfamily. Homo- and heterotetramers. Phosphofructokinase (PFK) enzyme functions as a tetramer composed of different combinations of 3 types of subunits, called PFKM (M), PFKL (L) and PFKP (P). The composition of the PFK tetramer differs according to the tissue type it is present in. The kinetic and regulatory properties of the tetrameric enzyme are dependent on the subunit composition, hence can vary across tissues. Interacts (via C-terminus) with HK1 (via N-terminal spermatogenic cell-specific region). Mg(2+) serves as cofactor. GlcNAcylation decreases enzyme activity.

It is found in the cytoplasm. The catalysed reaction is beta-D-fructose 6-phosphate + ATP = beta-D-fructose 1,6-bisphosphate + ADP + H(+). The protein operates within carbohydrate degradation; glycolysis; D-glyceraldehyde 3-phosphate and glycerone phosphate from D-glucose: step 3/4. With respect to regulation, allosterically activated by ADP, AMP, or fructose 2,6-bisphosphate, and allosterically inhibited by ATP or citrate. Its function is as follows. Catalyzes the phosphorylation of D-fructose 6-phosphate to fructose 1,6-bisphosphate by ATP, the first committing step of glycolysis. The protein is ATP-dependent 6-phosphofructokinase, muscle type (PFKM) of Pongo abelii (Sumatran orangutan).